A 90-amino-acid chain; its full sequence is Envelope protein US9 homolog (90 aa).

The Intravirion portion of the chain corresponds to Met-1–Ala-63. The Di-leucine internalization motif motif lies at Leu-12–Leu-13. Residues Glu-29–Glu-38 form an acidic region. The helical; Signal-anchor for type II membrane protein transmembrane segment at Ala-64–Met-84 threads the bilayer. Topologically, residues Cys-85–Arg-90 are virion surface.

Belongs to the alphaherpesvirinae envelope protein US9 family. Phosphorylated on serines within the acidic cluster. Phosphorylation determines whether endocytosed viral US9 traffics to the trans-Golgi network or recycles to the cell membrane.

The protein resides in the virion membrane. Its subcellular location is the host Golgi apparatus membrane. It localises to the host smooth endoplasmic reticulum membrane. It is found in the host cell membrane. Essential for the anterograde spread of the infection throughout the host nervous system. Together with the gE/gI heterodimer, US9 is involved in the sorting and transport of viral structural components toward axon tips. This is Envelope protein US9 homolog from Cercopithecine herpesvirus 1 (CeHV-1).